Reading from the N-terminus, the 155-residue chain is Endoribonuclease YbeY (155 aa).

Residues His120, His124, and His130 each coordinate Zn(2+).

The protein belongs to the endoribonuclease YbeY family. Zn(2+) is required as a cofactor.

It localises to the cytoplasm. Its function is as follows. Single strand-specific metallo-endoribonuclease involved in late-stage 70S ribosome quality control and in maturation of the 3' terminus of the 16S rRNA. This Staphylococcus epidermidis (strain ATCC 12228 / FDA PCI 1200) protein is Endoribonuclease YbeY.